The chain runs to 383 residues: MLSRKKTKNEVSKPAEVQGKYVKKETSPLLRNLMPSFIRHGPTIPRRTDICLPDSSPNAFSTSGDVVSRNQSFLRTPIQRTPHEIMRRESNRLSAPSYLARSLADVPREYGSSQSFVTEVSFAVENGDSGSRYYYSDNFFDGQRKRPLGDRAHEDYRYYEYNHDLFQRMPQNQGRHASGIGRVAATSLGNLTNHGSEDLPLPPGWSVDWTMRGRKYYIDHNTNTTHWSHPLEREGLPPGWERVESSEFGTYYVDHTNKKAQYRHPCAPSVPRYDQPPPVTYQPQQTERNQSLLVPANPYHTAEIPDWLQVYARAPVKYDHILKWELFQLADLDTYQGMLKLLFMKELEQIVKMYEAYRQALLTELENRKQRQQWYAQQHGKNF.

S94 and S136 each carry phosphoserine. WW domains are found at residues 199 to 232 and 234 to 267; these read LPLPPGWSVDWTMRGRKYYIDHNTNTTHWSHPLE and EGLPPGWERVESSEFGTYYVDHTNKKAQYRHPCA. T210 carries the phosphothreonine modification. One can recognise an SARAH domain in the interval 321-368; that stretch reads ILKWELFQLADLDTYQGMLKLLFMKELEQIVKMYEAYRQALLTELENR. Residues 344 to 373 are a coiled coil; the sequence is MKELEQIVKMYEAYRQALLTELENRKQRQQ.

In terms of assembly, homodimer. Stabilized through interaction with STK3/MST2 or STK4/MST1. Interacts (via SARAH domain) with isoform 1 of NEK2. Interacts with ESR1 only in the presence of STK3/MST2. Interacts with WTIP and AJUBA. In terms of processing, phosphorylated by STK3/MST2 and STK4/MST1. Phosphorylation is not required for SAV1 stability and may increase the number of protein binding sites on the scaffold molecule. Ubiquitously expressed in adult tissues with highest expression in the pancreas, aorta and interventricular septum and lowest expression in skeletal muscle. Expression was higher in fetal than in the adult heart. Expressed in various cell lines.

The protein localises to the nucleus. It localises to the cytoplasm. In terms of biological role, regulator of STK3/MST2 and STK4/MST1 in the Hippo signaling pathway which plays a pivotal role in organ size control and tumor suppression by restricting proliferation and promoting apoptosis. The core of this pathway is composed of a kinase cascade wherein STK3/MST2 and STK4/MST1, in complex with its regulatory protein SAV1, phosphorylates and activates LATS1/2 in complex with its regulatory protein MOB1, which in turn phosphorylates and inactivates YAP1 oncoprotein and WWTR1/TAZ. Phosphorylation of YAP1 by LATS1/2 inhibits its translocation into the nucleus to regulate cellular genes important for cell proliferation, cell death, and cell migration. SAV1 is required for STK3/MST2 and STK4/MST1 activation and promotes cell-cycle exit and terminal differentiation in developing epithelial tissues. Plays a role in centrosome disjunction by regulating the localization of NEK2 to centrosomes, and its ability to phosphorylate CROCC and CEP250. In conjunction with STK3/MST2, activates the transcriptional activity of ESR1 through the modulation of its phosphorylation. The polypeptide is Protein salvador homolog 1 (Homo sapiens (Human)).